A 730-amino-acid polypeptide reads, in one-letter code: Polyribonucleotide nucleotidyltransferase (730 aa).

Mg(2+) contacts are provided by Asp494 and Asp500. Residues 561-622 (PRIQTIQIDP…EAMNRAIQEI (62 aa)) enclose the KH domain. The region spanning 642-711 (GKIYTGRVTG…RSGKVRLSRK (70 aa)) is the S1 motif domain.

It belongs to the polyribonucleotide nucleotidyltransferase family. Requires Mg(2+) as cofactor.

It is found in the cytoplasm. It catalyses the reaction RNA(n+1) + phosphate = RNA(n) + a ribonucleoside 5'-diphosphate. Its function is as follows. Involved in mRNA degradation. Catalyzes the phosphorolysis of single-stranded polyribonucleotides processively in the 3'- to 5'-direction. This chain is Polyribonucleotide nucleotidyltransferase, found in Opitutus terrae (strain DSM 11246 / JCM 15787 / PB90-1).